The chain runs to 484 residues: Glutamyl-tRNA(Gln) amidotransferase subunit A (484 aa).

Catalysis depends on charge relay system residues lysine 76 and serine 151. Serine 175 functions as the Acyl-ester intermediate in the catalytic mechanism.

Belongs to the amidase family. GatA subfamily. As to quaternary structure, heterotrimer of A, B and C subunits.

The catalysed reaction is L-glutamyl-tRNA(Gln) + L-glutamine + ATP + H2O = L-glutaminyl-tRNA(Gln) + L-glutamate + ADP + phosphate + H(+). Allows the formation of correctly charged Gln-tRNA(Gln) through the transamidation of misacylated Glu-tRNA(Gln) in organisms which lack glutaminyl-tRNA synthetase. The reaction takes place in the presence of glutamine and ATP through an activated gamma-phospho-Glu-tRNA(Gln). This is Glutamyl-tRNA(Gln) amidotransferase subunit A from Cellvibrio japonicus (strain Ueda107) (Pseudomonas fluorescens subsp. cellulosa).